We begin with the raw amino-acid sequence, 155 residues long: Transcriptional regulator MraZ (155 aa).

SpoVT-AbrB domains lie at 5–52 (TYEN…SQDR) and 81–124 (SMNL…EPAA).

Belongs to the MraZ family. Forms oligomers.

Its subcellular location is the cytoplasm. It is found in the nucleoid. This is Transcriptional regulator MraZ from Pelagibacter ubique (strain HTCC1062).